The sequence spans 214 residues: MRAELAVYFIAGTQDIVRGTLPGVLEEALKAGITCFQYREKGAGSLQTASERKEMALECQQLCTKYQVPFIINDDVALALEIGADGIHVGQNDEEIRQVIASCAGKMKIGLSVHSVSEAEEAERLGAVDYIGVGPIFPTISKADAESVSGTAILEEIRRAGIKLPIVGIGGINETNSAEVLTAGADGVSVISAITRSDDCYSVIKQLKNPGYPS.

Residues Gln-37 to Lys-41 and Asn-73 contribute to the 4-amino-2-methyl-5-(diphosphooxymethyl)pyrimidine site. Residues Asp-74 and Asp-93 each coordinate Mg(2+). Ser-112 is a binding site for 4-amino-2-methyl-5-(diphosphooxymethyl)pyrimidine. Residue Thr-139–Ser-141 participates in 2-[(2R,5Z)-2-carboxy-4-methylthiazol-5(2H)-ylidene]ethyl phosphate binding. 4-amino-2-methyl-5-(diphosphooxymethyl)pyrimidine is bound at residue Lys-142. 2-[(2R,5Z)-2-carboxy-4-methylthiazol-5(2H)-ylidene]ethyl phosphate-binding positions include Gly-171 and Ile-191–Ser-192.

Belongs to the thiamine-phosphate synthase family. The cofactor is Mg(2+).

It catalyses the reaction 2-[(2R,5Z)-2-carboxy-4-methylthiazol-5(2H)-ylidene]ethyl phosphate + 4-amino-2-methyl-5-(diphosphooxymethyl)pyrimidine + 2 H(+) = thiamine phosphate + CO2 + diphosphate. The enzyme catalyses 2-(2-carboxy-4-methylthiazol-5-yl)ethyl phosphate + 4-amino-2-methyl-5-(diphosphooxymethyl)pyrimidine + 2 H(+) = thiamine phosphate + CO2 + diphosphate. It carries out the reaction 4-methyl-5-(2-phosphooxyethyl)-thiazole + 4-amino-2-methyl-5-(diphosphooxymethyl)pyrimidine + H(+) = thiamine phosphate + diphosphate. The protein operates within cofactor biosynthesis; thiamine diphosphate biosynthesis; thiamine phosphate from 4-amino-2-methyl-5-diphosphomethylpyrimidine and 4-methyl-5-(2-phosphoethyl)-thiazole: step 1/1. Functionally, condenses 4-methyl-5-(beta-hydroxyethyl)thiazole monophosphate (THZ-P) and 2-methyl-4-amino-5-hydroxymethyl pyrimidine pyrophosphate (HMP-PP) to form thiamine monophosphate (TMP). The sequence is that of Thiamine-phosphate synthase from Listeria monocytogenes serotype 4b (strain F2365).